The chain runs to 149 residues: Transcriptional regulator MraZ (149 aa).

SpoVT-AbrB domains lie at 7 to 54 (KYIN…GIAH) and 83 to 126 (AVQL…QPQN).

Belongs to the MraZ family. As to quaternary structure, forms oligomers.

Its subcellular location is the cytoplasm. It localises to the nucleoid. The sequence is that of Transcriptional regulator MraZ from Rickettsia typhi (strain ATCC VR-144 / Wilmington).